Here is a 70-residue protein sequence, read N- to C-terminus: uncharacterized protein (70 aa).

The protein localises to the plastid. The protein resides in the chloroplast. This is an uncharacterized protein from Mesostigma viride (Green alga).